Here is a 642-residue protein sequence, read N- to C-terminus: MIHKRMNSTELERTSKKIDDYDSSDEEDLRNTIGNIPISWYDDFSHVGYDKDGNQIESAKKNDDMEEFLDRMDDSNYWRRVYDRQSGGFVTLNDEEVKKLNALDASKYPLVGYNPYQPFLDIFSSQTEIHPISNRPDSKRSFIPSLDEKRLVGKMVHAIKMGWVRPSRPKQIEKRVYDLWADNPCSEKTKTELARIRMHFPAPKVPLPGHAESYNPPAEYLCDEEELKKWEETDPEDRRLDFIPKKYDCLRKVPAYDRFYNDRYQRCLDLYLAPRQRKMKLNIDHTELLPELPNLTDMRPFPTTQSFLMLGHSGQVRSLSFEPESTEIFASGGEDGTLRLWSICDGRCLKTTSLDGSITSVAYCPLAKWTLLAVTMESNKMILTNSYCGDRHRITTTTEYLSKLRCESSESDVLKWKYEGKGTLSVDLGYIARQVVWHHKGDYFATFANSKSPKLIYIHQLSKCKSQRPFSRLKGLMTVLSFHPSEPFLFVGTQRYIRIYDLAKCQLKKKIITGSQWMSCMHVDFRGDNVFVGGHDRVFSWIDLQLSSKPWKSVKHHTAAIRGVTQHARCPLIATVSDDSTAIVYYARISSDSLKENEFVPVRRLRTQTAQKNGLSILAAIFHPSQPWLITAHVDGSIALFT.

The disordered stretch occupies residues 1-28; that stretch reads MIHKRMNSTELERTSKKIDDYDSSDEED. Basic and acidic residues predominate over residues 10 to 20; sequence ELERTSKKIDD. WD repeat units follow at residues 311 to 351, 353 to 393, 472 to 510, 513 to 552, 556 to 595, and 612 to 642; these read GHSG…CLKT, SLDG…DRHR, RLKG…LKKK, TGSQ…KPWK, HHTA…DSLK, and KNGL…ALFT.

This sequence belongs to the WD repeat BOP1/ERB1 family.

Its subcellular location is the nucleus. The protein resides in the nucleolus. It localises to the nucleoplasm. Required for maturation of ribosomal RNAs and formation of the large ribosomal subunit. This is Ribosome biogenesis protein BOP1 homolog from Brugia malayi (Filarial nematode worm).